Here is a 140-residue protein sequence, read N- to C-terminus: Anti-sigma F factor (140 aa).

Belongs to the anti-sigma-factor family.

It carries out the reaction L-seryl-[protein] + ATP = O-phospho-L-seryl-[protein] + ADP + H(+). It catalyses the reaction L-threonyl-[protein] + ATP = O-phospho-L-threonyl-[protein] + ADP + H(+). Binds to sigma F and blocks its ability to form an RNA polymerase holoenzyme (E-sigma F). Phosphorylates SpoIIAA on a serine residue. This phosphorylation may enable SpoIIAA to act as an anti-anti-sigma factor that counteracts SpoIIAB and thus releases sigma F from inhibition. The chain is Anti-sigma F factor from Clostridium perfringens (strain SM101 / Type A).